A 172-amino-acid polypeptide reads, in one-letter code: Translationally-controlled tumor protein (172 aa).

Positions 1–172 constitute a TCTP domain; it reads MIIYRDLISH…FKDGLEMEKC (172 aa). Residues serine 46 and serine 53 each carry the phosphoserine modification. Serine 64 bears the Phosphoserine; by PLK1 mark. The tract at residues 70–172 is required for reduction of TSC22D1 protein stability; that stretch reads VDIVMNHHLQ…FKDGLEMEKC (103 aa).

Belongs to the TCTP family. As to quaternary structure, homodimer. Interacts with STEAP3. Interacts with TSC22D1; interaction results in the destabilization of TSC22D1 protein.

Its subcellular location is the cytoplasm. Its function is as follows. Involved in calcium binding and microtubule stabilization. Acts as a negative regulator of TSC22D1-mediated apoptosis, via interaction with and destabilization of TSC22D1 protein. In Mus musculus (Mouse), this protein is Translationally-controlled tumor protein (Tpt1).